We begin with the raw amino-acid sequence, 96 residues long: MELMKMTLYTTFMITIIALSLQQKHLMLALMCVETMMLIVFTMLVMFNSNSLTVSQTPMPIILLTISVCGAAVGLSLVVAITRTHGNDFLKNLNLL.

The next 3 helical transmembrane spans lie at 1–21 (MELM…ALSL), 27–47 (MLAL…LVMF), and 61–81 (IILL…VVAI).

The protein belongs to the complex I subunit 4L family.

Its subcellular location is the mitochondrion membrane. It catalyses the reaction a ubiquinone + NADH + 5 H(+)(in) = a ubiquinol + NAD(+) + 4 H(+)(out). In terms of biological role, core subunit of the mitochondrial membrane respiratory chain NADH dehydrogenase (Complex I) which catalyzes electron transfer from NADH through the respiratory chain, using ubiquinone as an electron acceptor. Part of the enzyme membrane arm which is embedded in the lipid bilayer and involved in proton translocation. This is NADH-ubiquinone oxidoreductase chain 4L (MT-ND4L) from Lycodon semicarinatus (Ryukyu odd-tooth snake).